The sequence spans 101 residues: Floral defensin-like protein 2 (101 aa).

The first 25 residues, 1–25, serve as a signal peptide directing secretion; it reads MARSICFFAVAILALMLFAAYETEA. 5 disulfides stabilise this stretch: cysteine 28/cysteine 74, cysteine 32/cysteine 48, cysteine 39/cysteine 61, cysteine 45/cysteine 68, and cysteine 49/cysteine 70. Residues 75–101 constitute a propeptide, removed in mature form; sequence ATEEATATLANEVKTMAEALVEEDMME.

Belongs to the DEFL family. Post-translationally, when compared to other plant defensins, the petunia defensins have an additional fifth disulfide bond. As to expression, petals.

It is found in the secreted. The protein localises to the vacuole. Its function is as follows. Plant defense peptide with antifungal activity against F.oxysporum and B.cinerea. In Petunia hybrida (Petunia), this protein is Floral defensin-like protein 2 (D2).